We begin with the raw amino-acid sequence, 304 residues long: Ribosomal RNA small subunit methyltransferase H (304 aa).

Residues 50–52, Asp69, Phe97, Asp113, and Gln120 contribute to the S-adenosyl-L-methionine site; that span reads GGH.

It belongs to the methyltransferase superfamily. RsmH family.

It localises to the cytoplasm. The enzyme catalyses cytidine(1402) in 16S rRNA + S-adenosyl-L-methionine = N(4)-methylcytidine(1402) in 16S rRNA + S-adenosyl-L-homocysteine + H(+). Specifically methylates the N4 position of cytidine in position 1402 (C1402) of 16S rRNA. The protein is Ribosomal RNA small subunit methyltransferase H of Rippkaea orientalis (strain PCC 8801 / RF-1) (Cyanothece sp. (strain PCC 8801)).